The sequence spans 469 residues: Adenosylhomocysteinase (469 aa).

3 residues coordinate substrate: Thr-63, Asp-139, and Glu-164. 165-167 (TTT) provides a ligand contact to NAD(+). Lys-194 and Asp-198 together coordinate substrate. NAD(+) contacts are provided by residues Asn-199, 228–233 (GYGDVG), Glu-251, Asn-300, 321–323 (IGH), and Asn-375.

This sequence belongs to the adenosylhomocysteinase family. It depends on NAD(+) as a cofactor.

Its subcellular location is the cytoplasm. The enzyme catalyses S-adenosyl-L-homocysteine + H2O = L-homocysteine + adenosine. The protein operates within amino-acid biosynthesis; L-homocysteine biosynthesis; L-homocysteine from S-adenosyl-L-homocysteine: step 1/1. May play a key role in the regulation of the intracellular concentration of adenosylhomocysteine. In Pseudomonas entomophila (strain L48), this protein is Adenosylhomocysteinase.